We begin with the raw amino-acid sequence, 460 residues long: Fumarate hydratase class II (460 aa).

Residues 95 to 97 (SGT), 126 to 129 (HPND), 136 to 138 (SSN), and Thr184 contribute to the substrate site. The active-site Proton donor/acceptor is His185. Ser315 is an active-site residue. Substrate contacts are provided by residues Ser316 and 321 to 323 (KVN).

This sequence belongs to the class-II fumarase/aspartase family. Fumarase subfamily. In terms of assembly, homotetramer.

It is found in the cytoplasm. It carries out the reaction (S)-malate = fumarate + H2O. It functions in the pathway carbohydrate metabolism; tricarboxylic acid cycle; (S)-malate from fumarate: step 1/1. Involved in the TCA cycle. Catalyzes the stereospecific interconversion of fumarate to L-malate. The sequence is that of Fumarate hydratase class II from Chlamydia pneumoniae (Chlamydophila pneumoniae).